A 255-amino-acid polypeptide reads, in one-letter code: Protein patched homolog 2 (255 aa).

Topologically, residues 1–197 (SLLQGGSAYL…LNDIMKSFSD (197 aa)) are extracellular. 2 N-linked (GlcNAc...) asparagine glycosylation sites follow: Asn-147 and Asn-175. A helical membrane pass occupies residues 198 to 218 (VSVIRVAGGYLLMLAYACVTM). The region spanning 199–255 (SVIRVAGGYLLMLAYACVTMLRWDCTKSQGAVGLAGVLLVALSVASGLGLCSLLGIS) is the SSD domain. The Cytoplasmic segment spans residues 219-227 (LRWDCTKSQ). The chain crosses the membrane as a helical span at residues 228–248 (GAVGLAGVLLVALSVASGLGL). Residues 249 to 255 (CSLLGIS) are Extracellular-facing.

This sequence belongs to the patched family. In the eye, detected in neural retina, iris, retinal pigment epithelium, but not in lens.

It localises to the membrane. In terms of biological role, may act as a receptor for sonic hedgehog (SHH). This is Protein patched homolog 2 (PTC2) from Cynops pyrrhogaster (Japanese fire-bellied newt).